Consider the following 621-residue polypeptide: Chaperone protein HscA homolog (621 aa).

It belongs to the heat shock protein 70 family.

Its function is as follows. Chaperone involved in the maturation of iron-sulfur cluster-containing proteins. Has a low intrinsic ATPase activity which is markedly stimulated by HscB. This Cupriavidus taiwanensis (strain DSM 17343 / BCRC 17206 / CCUG 44338 / CIP 107171 / LMG 19424 / R1) (Ralstonia taiwanensis (strain LMG 19424)) protein is Chaperone protein HscA homolog.